The sequence spans 109 residues: Non-structural protein ORF4a (109 aa).

Interacts with host PRKRA/PACT.

It localises to the host cytoplasm. Its function is as follows. DsRNA-binding protein that plays a role in the inhibition of host innate response. Suppresses host PACT-induced activation of RIGI and MDA5 and thereby circumvents the production of type I interferons. Also prevents the activation of host NF-kappa-B. Inhibits the integrated stress response (ISR) in the infected cell by binding to dsRNA and inhibiting EIF2AK2-mediated phosphorylation of EIF2S1/eIF2-alpha. Stress granule formation is thus inhibited, which allows protein synthesis and viral replication. In Middle East respiratory syndrome-related coronavirus (isolate United Kingdom/H123990006/2012) (MERS-CoV), this protein is Non-structural protein ORF4a (ORF4a).